The following is a 115-amino-acid chain: UPF0102 protein Swol_1475 (115 aa).

Belongs to the UPF0102 family.

This is UPF0102 protein Swol_1475 from Syntrophomonas wolfei subsp. wolfei (strain DSM 2245B / Goettingen).